A 520-amino-acid polypeptide reads, in one-letter code: Nucleolar protein 12 (520 aa).

Disordered stretches follow at residues 1–29 (MGKKSKSQKEAPATESAGSLPFLGGNVSV) and 41–185 (AGPV…DDDE). Residues 78 to 95 (ASEDQFMEDAPESPDAAE) show a composition bias toward acidic residues. Basic and acidic residues predominate over residues 120 to 132 (SYMRRLAKEEQKE). Positions 144 to 168 (LEEESEDGEKESPQSEDGESEDEGA) are enriched in acidic residues. 2 RRM domains span residues 191-303 (RTVF…NVAH) and 311-421 (RCVF…RAKK). Residues 472–520 (EGNRATADGSSRIRVRTKSRGSKAKKDSRSKKRAAAYKAAGGKKAKIGK) form a disordered region. Residues 484–520 (IRVRTKSRGSKAKKDSRSKKRAAAYKAAGGKKAKIGK) show a composition bias toward basic residues.

The protein belongs to the RRM RBM34 family.

It localises to the nucleus. Its subcellular location is the nucleolus. Involved in pre-25S rRNA processing. The sequence is that of Nucleolar protein 12 (nop12) from Emericella nidulans (strain FGSC A4 / ATCC 38163 / CBS 112.46 / NRRL 194 / M139) (Aspergillus nidulans).